Reading from the N-terminus, the 178-residue chain is Prion-like protein doppel (178 aa).

Positions 1-25 (MRKHLGGCWLAIVCVLLFSQLSSVK) are cleaved as a signal peptide. The tract at residues 27–50 (RGIKHRIKWNRKVLPSTSQVTEAH) is flexible tail. Positions 51-154 (TAEIRPGAFI…KHCDFWLERG (104 aa)) are globular. 2 disulfides stabilise this stretch: Cys94–Cys147 and Cys108–Cys142. Residues Asn98 and Asn110 are each glycosylated (N-linked (GlcNAc...) asparagine). The interval 124 to 141 (KQDNKLYQRVLWQLIREL) is cu(2+) binding. Gly154 carries the GPI-anchor amidated glycine lipid modification. A propeptide spans 155 to 178 (AGLQVTLDQPMMLCLLVFIWFIVK) (removed in mature form).

The protein belongs to the prion family. N-glycosylated. In terms of processing, O-glycosylated. In terms of tissue distribution, strongly expressed in testis. Detected at low levels in lymph node, spleen and ovary.

It is found in the cell membrane. Functionally, required for normal acrosome reaction and for normal male fertility. Can bind Cu(2+). This chain is Prion-like protein doppel (PRND), found in Ovis aries (Sheep).